Here is a 264-residue protein sequence, read N- to C-terminus: Thymidylate synthase (264 aa).

Residue Arg21 coordinates dUMP. His51 serves as a coordination point for (6R)-5,10-methylene-5,6,7,8-tetrahydrofolate. 126–127 (RR) lines the dUMP pocket. The Nucleophile role is filled by Cys146. DUMP is bound by residues 166–169 (RSAD), Asn177, and 207–209 (HIY). Asp169 is a (6R)-5,10-methylene-5,6,7,8-tetrahydrofolate binding site. Ser263 serves as a coordination point for (6R)-5,10-methylene-5,6,7,8-tetrahydrofolate.

This sequence belongs to the thymidylate synthase family. Bacterial-type ThyA subfamily. Homodimer.

It localises to the cytoplasm. The catalysed reaction is dUMP + (6R)-5,10-methylene-5,6,7,8-tetrahydrofolate = 7,8-dihydrofolate + dTMP. Its pathway is pyrimidine metabolism; dTTP biosynthesis. Catalyzes the reductive methylation of 2'-deoxyuridine-5'-monophosphate (dUMP) to 2'-deoxythymidine-5'-monophosphate (dTMP) while utilizing 5,10-methylenetetrahydrofolate (mTHF) as the methyl donor and reductant in the reaction, yielding dihydrofolate (DHF) as a by-product. This enzymatic reaction provides an intracellular de novo source of dTMP, an essential precursor for DNA biosynthesis. This chain is Thymidylate synthase, found in Phocaeicola vulgatus (strain ATCC 8482 / DSM 1447 / JCM 5826 / CCUG 4940 / NBRC 14291 / NCTC 11154) (Bacteroides vulgatus).